Consider the following 529-residue polypeptide: Bifunctional purine biosynthesis protein PurH (529 aa).

An MGS-like domain is found at 1–148 (MQQRRPVRRA…KNHKDVAIVV (148 aa)). N6-acetyllysine is present on Lys-287.

The protein belongs to the PurH family.

It catalyses the reaction (6R)-10-formyltetrahydrofolate + 5-amino-1-(5-phospho-beta-D-ribosyl)imidazole-4-carboxamide = 5-formamido-1-(5-phospho-D-ribosyl)imidazole-4-carboxamide + (6S)-5,6,7,8-tetrahydrofolate. The catalysed reaction is IMP + H2O = 5-formamido-1-(5-phospho-D-ribosyl)imidazole-4-carboxamide. It participates in purine metabolism; IMP biosynthesis via de novo pathway; 5-formamido-1-(5-phospho-D-ribosyl)imidazole-4-carboxamide from 5-amino-1-(5-phospho-D-ribosyl)imidazole-4-carboxamide (10-formyl THF route): step 1/1. The protein operates within purine metabolism; IMP biosynthesis via de novo pathway; IMP from 5-formamido-1-(5-phospho-D-ribosyl)imidazole-4-carboxamide: step 1/1. This is Bifunctional purine biosynthesis protein PurH from Escherichia coli O6:H1 (strain CFT073 / ATCC 700928 / UPEC).